Consider the following 299-residue polypeptide: tRNA dimethylallyltransferase (299 aa).

13-20 (GPTASGKT) lines the ATP pocket. 15-20 (TASGKT) contacts substrate. The interaction with substrate tRNA stretch occupies residues 38–41 (DSRQ).

Belongs to the IPP transferase family. As to quaternary structure, monomer. The cofactor is Mg(2+).

The enzyme catalyses adenosine(37) in tRNA + dimethylallyl diphosphate = N(6)-dimethylallyladenosine(37) in tRNA + diphosphate. Functionally, catalyzes the transfer of a dimethylallyl group onto the adenine at position 37 in tRNAs that read codons beginning with uridine, leading to the formation of N6-(dimethylallyl)adenosine (i(6)A). The chain is tRNA dimethylallyltransferase from Prochlorococcus marinus (strain NATL2A).